The following is a 146-amino-acid chain: Catabolic 3-dehydroquinase (146 aa).

The active-site Proton acceptor is Tyr-24. Asn-78, His-84, and Asp-91 together coordinate substrate. The active-site Proton donor is His-104. Residues 105 to 106 and Arg-115 contribute to the substrate site; that span reads IT.

It belongs to the type-II 3-dehydroquinase family. As to quaternary structure, homododecamer. Adopts a ring-like structure, composed of an arrangement of two hexameric rings stacked on top of one another.

It carries out the reaction 3-dehydroquinate = 3-dehydroshikimate + H2O. Its pathway is aromatic compound metabolism; 3,4-dihydroxybenzoate biosynthesis; 3,4-dihydroxybenzoate from 3-dehydroquinate: step 1/2. Functionally, is involved in the catabolism of quinate. Allows the utilization of quinate as carbon source via the beta-ketoadipate pathway. This chain is Catabolic 3-dehydroquinase, found in Scheffersomyces stipitis (strain ATCC 58785 / CBS 6054 / NBRC 10063 / NRRL Y-11545) (Yeast).